The sequence spans 370 residues: Histidinol-phosphate aminotransferase 1 (370 aa).

Residue Lys229 is modified to N6-(pyridoxal phosphate)lysine.

The protein belongs to the class-II pyridoxal-phosphate-dependent aminotransferase family. Histidinol-phosphate aminotransferase subfamily. In terms of assembly, homodimer. It depends on pyridoxal 5'-phosphate as a cofactor.

The enzyme catalyses L-histidinol phosphate + 2-oxoglutarate = 3-(imidazol-4-yl)-2-oxopropyl phosphate + L-glutamate. The protein operates within amino-acid biosynthesis; L-histidine biosynthesis; L-histidine from 5-phospho-alpha-D-ribose 1-diphosphate: step 7/9. This is Histidinol-phosphate aminotransferase 1 from Nitrosococcus oceani (strain ATCC 19707 / BCRC 17464 / JCM 30415 / NCIMB 11848 / C-107).